Consider the following 112-residue polypeptide: Probable small nuclear ribonucleoprotein Sm D2 (112 aa).

Over residues 1–15 (MSRMNDETMEDKPDD) the composition is skewed to basic and acidic residues. Residues 1 to 23 (MSRMNDETMEDKPDDSNGPLSIL) form a disordered region. Residues 20–106 (LSILMDSVNN…VILVLKNPLG (87 aa)) form the Sm domain.

The protein belongs to the snRNP core protein family.

It localises to the nucleus. It is found in the cytoplasm. The protein resides in the cytosol. Its function is as follows. Plays a role in pre-mRNA splicing as a core component of the spliceosomal U1, U2, U4 and U5 small nuclear ribonucleoproteins (snRNPs), the building blocks of the spliceosome. This Dictyostelium discoideum (Social amoeba) protein is Probable small nuclear ribonucleoprotein Sm D2 (snrpd2).